Reading from the N-terminus, the 237-residue chain is Neurogenin-1 (237 aa).

The tract at residues 35–83 (LQQAASASGPPAPARRGAPNISRASEVPGAQDDEQERRRRRGRTRVRSE) is disordered. A compositionally biased stretch (low complexity) spans 38 to 53 (AASASGPPAPARRGAP). Residues 92-144 (SRRVKANDRERNRMHNLNAALDALRSVLPSFPDDTKLTKIETLRFAYNYIWAL) form the bHLH domain. Positions 175 to 209 (GPPSPASDAESWGSGAAAASPLSDPSSPAASEDFT) are disordered. Positions 180–207 (ASDAESWGSGAAAASPLSDPSSPAASED) are enriched in low complexity.

As to quaternary structure, efficient DNA binding requires dimerization with another bHLH protein. As to expression, expression restricted to the embryonic nervous system.

The protein localises to the nucleus. In terms of biological role, acts as a transcriptional regulator. Involved in the initiation of neuronal differentiation. Activates transcription by binding to the E box (5'-CANNTG-3'). Associates with chromatin to enhancer regulatory elements in genes encoding key transcriptional regulators of neurogenesis. This is Neurogenin-1 (NEUROG1) from Homo sapiens (Human).